A 556-amino-acid chain; its full sequence is MHPMALHMVLPAHLPFLSPEVLRLLEVHVKKWMHFQRWGLPRRVEESLRQLMPNPPLYYQPGNDQPVSFNLNNTSQVSLHRSETISLQTWCSCVAGQPIQTFWVSEWSTMNPEQRHHCQQTPNPMALALPSPALKALSGPHPQSGGQDNDSGSDLQQKYSQLFCGLPSLHSESLVATFMGSQGLPKIENVPKPPLKDPFLFNDLSFPQLLPKTSPQSAPPSSPLSPNWVSPSDHQRAQINVPFLTLAEYEALEWHLLQRQLQLQWGWPAALQRSQHTQCLMQHEPCGKAQSPETTTASQTGKSISVLTRELLFFPEHARKLLEFHIQKQSIRHRWGLPQKIQQSIQLLLTSTDQQTVSSSSTALANVSIPQPVALEANGACDVLSPIAAPVSIPRPHLLTQVKAILQSHIDSKCGQIHQGKIPACVHRSWDCRISGVLAVAPFPCIPESQFLVLQTASDPDLHHKVMPWMPTALDQQQQALPGTVTEHPKLLRVLSVEAIEKLETTLRHKHLAFLSGLPALYYVALPRALAPAVTSQSVITEMEPSPVEIPAEPLI.

2 disordered regions span residues 133–154 (ALKA…SGSD) and 210–231 (LPKT…WVSP). The segment covering 144 to 154 (SGGQDNDSGSD) has biased composition (polar residues).

The protein belongs to the SPATA31 family.

The chain is Putative protein SPATA31F2P from Homo sapiens (Human).